Consider the following 178-residue polypeptide: Large ribosomal subunit protein uL6 (178 aa).

This sequence belongs to the universal ribosomal protein uL6 family. As to quaternary structure, part of the 50S ribosomal subunit.

Its function is as follows. This protein binds to the 23S rRNA, and is important in its secondary structure. It is located near the subunit interface in the base of the L7/L12 stalk, and near the tRNA binding site of the peptidyltransferase center. The polypeptide is Large ribosomal subunit protein uL6 (Halobacterium salinarum (strain ATCC 700922 / JCM 11081 / NRC-1) (Halobacterium halobium)).